The primary structure comprises 356 residues: Chorismate synthase (356 aa).

NADP(+) is bound at residue Arg44. FMN-binding positions include 121–123 (HFS), Gly278, 293–297 (KPTPS), and Arg320.

This sequence belongs to the chorismate synthase family. It depends on FMNH2 as a cofactor.

The enzyme catalyses 5-O-(1-carboxyvinyl)-3-phosphoshikimate = chorismate + phosphate. It functions in the pathway metabolic intermediate biosynthesis; chorismate biosynthesis; chorismate from D-erythrose 4-phosphate and phosphoenolpyruvate: step 7/7. Functionally, catalyzes the anti-1,4-elimination of the C-3 phosphate and the C-6 proR hydrogen from 5-enolpyruvylshikimate-3-phosphate (EPSP) to yield chorismate, which is the branch point compound that serves as the starting substrate for the three terminal pathways of aromatic amino acid biosynthesis. This reaction introduces a second double bond into the aromatic ring system. The chain is Chorismate synthase from Pyrococcus abyssi (strain GE5 / Orsay).